We begin with the raw amino-acid sequence, 90 residues long: Probable Fe(2+)-trafficking protein (90 aa).

This sequence belongs to the Fe(2+)-trafficking protein family.

In terms of biological role, could be a mediator in iron transactions between iron acquisition and iron-requiring processes, such as synthesis and/or repair of Fe-S clusters in biosynthetic enzymes. This is Probable Fe(2+)-trafficking protein from Hydrogenovibrio crunogenus (strain DSM 25203 / XCL-2) (Thiomicrospira crunogena).